A 225-amino-acid polypeptide reads, in one-letter code: Platelet-activating factor acetylhydrolase IB subunit beta homolog (225 aa).

This sequence belongs to the 'GDSL' lipolytic enzyme family. Platelet-activating factor acetylhydrolase IB beta/gamma subunits subfamily. Does not interact with Lis-1.

This is Platelet-activating factor acetylhydrolase IB subunit beta homolog (Paf-AHalpha) from Drosophila melanogaster (Fruit fly).